The primary structure comprises 433 residues: Histidinol dehydrogenase (433 aa).

NAD(+)-binding residues include tyrosine 133, glutamine 194, and asparagine 217. 3 residues coordinate substrate: serine 240, glutamine 262, and histidine 265. Zn(2+) contacts are provided by glutamine 262 and histidine 265. Residues glutamate 330 and histidine 331 each act as proton acceptor in the active site. Histidine 331, aspartate 364, glutamate 418, and histidine 423 together coordinate substrate. Aspartate 364 provides a ligand contact to Zn(2+). Histidine 423 contacts Zn(2+).

This sequence belongs to the histidinol dehydrogenase family. Zn(2+) serves as cofactor.

It catalyses the reaction L-histidinol + 2 NAD(+) + H2O = L-histidine + 2 NADH + 3 H(+). The protein operates within amino-acid biosynthesis; L-histidine biosynthesis; L-histidine from 5-phospho-alpha-D-ribose 1-diphosphate: step 9/9. Functionally, catalyzes the sequential NAD-dependent oxidations of L-histidinol to L-histidinaldehyde and then to L-histidine. This chain is Histidinol dehydrogenase, found in Hydrogenovibrio crunogenus (strain DSM 25203 / XCL-2) (Thiomicrospira crunogena).